Reading from the N-terminus, the 606-residue chain is NADH-ubiquinone oxidoreductase chain 5 (606 aa).

16 helical membrane-spanning segments follow: residues 1–21, 35–55, 87–107, 114–134, 140–160, 171–191, 211–233, 241–261, 272–292, 301–320, 325–347, 366–386, 413–433, 457–477, 482–502, and 582–602; these read MNLF…PIMV, YVKN…MMYL, LMFM…SMWY, INQF…LVTA, LFIG…WWFG, AILY…WFLS, FPLM…HPWL, TPVS…FLLV, LIQT…AICA, IIAF…IGLN, AFLH…GSII, LPFT…MPFL, LTAT…ALLG, LLIG…PVIT, MPLH…IIAF, and GLIK…MILF.

The protein belongs to the complex I subunit 5 family. Core subunit of respiratory chain NADH dehydrogenase (Complex I) which is composed of 45 different subunits.

Its subcellular location is the mitochondrion inner membrane. It carries out the reaction a ubiquinone + NADH + 5 H(+)(in) = a ubiquinol + NAD(+) + 4 H(+)(out). Functionally, core subunit of the mitochondrial membrane respiratory chain NADH dehydrogenase (Complex I) which catalyzes electron transfer from NADH through the respiratory chain, using ubiquinone as an electron acceptor. Essential for the catalytic activity and assembly of complex I. The sequence is that of NADH-ubiquinone oxidoreductase chain 5 (MT-ND5) from Balaenoptera musculus (Blue whale).